Consider the following 416-residue polypeptide: Histone acetyltransferase type B catalytic subunit (416 aa).

N-acetylalanine is present on Ala2. Residues Lys6 and Lys12 each carry the N6-acetyllysine modification. The interaction with histone H4 N-terminus stretch occupies residues 59 to 61 (DDE). Residue Ser187 is modified to Phosphoserine. An interaction with histone H4 N-terminus region spans residues 222-224 (YNY). Acetyl-CoA contacts are provided by residues 238-240 (MLI) and 245-251 (QGQGHGA). The active-site Proton donor/acceptor is Glu273. Phosphoserine is present on Ser340.

The protein belongs to the HAT1 family. As to quaternary structure, catalytic subunit of the type B histone acetyltransferase (HAT) complex, composed of RBBP7 and HAT1. Interacts with histones H4 and H2A. The interaction is dependent of the ability of RBBP7 to bind to the N-terminus of histones. Component of the histone H3.1 and H3.3 complexes. Phosphorylated by AMPK at Ser-187; phosphorylation increases HAT1 activity.

It is found in the nucleus matrix. The protein localises to the mitochondrion. The catalysed reaction is L-lysyl-[protein] + acetyl-CoA = N(6)-acetyl-L-lysyl-[protein] + CoA + H(+). In terms of biological role, histone acetyltransferase that plays a role in different biological processes including cell cycle progression, glucose metabolism, histone production or DNA damage repair. Coordinates histone production and acetylation via H4 promoter binding. Acetylates histone H4 at 'Lys-5' (H4K5ac) and 'Lys-12' (H4K12ac) and, to a lesser extent, histone H2A at 'Lys-5' (H2AK5ac). Drives H4 production by chromatin binding to support chromatin replication and acetylation. Since transcription of H4 genes is tightly coupled to S-phase, plays an important role in S-phase entry and progression. Promotes homologous recombination in DNA repair by facilitating histone turnover and incorporation of acetylated H3.3 at sites of double-strand breaks. In addition, acetylates other substrates such as chromatin-related proteins. Also acetylates RSAD2 which mediates the interaction of ubiquitin ligase UBE4A with RSAD2 leading to RSAD2 ubiquitination and subsequent degradation. This chain is Histone acetyltransferase type B catalytic subunit (Hat1), found in Mus musculus (Mouse).